Consider the following 205-residue polypeptide: Adenylyl-sulfate kinase (205 aa).

31–38 (GLSGAGKS) is an ATP binding site. Ser105 (phosphoserine intermediate) is an active-site residue.

This sequence belongs to the APS kinase family.

It carries out the reaction adenosine 5'-phosphosulfate + ATP = 3'-phosphoadenylyl sulfate + ADP + H(+). It functions in the pathway sulfur metabolism; hydrogen sulfide biosynthesis; sulfite from sulfate: step 2/3. In terms of biological role, catalyzes the synthesis of activated sulfate. This Shewanella denitrificans (strain OS217 / ATCC BAA-1090 / DSM 15013) protein is Adenylyl-sulfate kinase.